A 304-amino-acid chain; its full sequence is UDP-3-O-acyl-N-acetylglucosamine deacetylase (304 aa).

Zn(2+) is bound by residues His-79, His-238, and Asp-242. His-265 acts as the Proton donor in catalysis.

It belongs to the LpxC family. Zn(2+) serves as cofactor.

The enzyme catalyses a UDP-3-O-[(3R)-3-hydroxyacyl]-N-acetyl-alpha-D-glucosamine + H2O = a UDP-3-O-[(3R)-3-hydroxyacyl]-alpha-D-glucosamine + acetate. The protein operates within glycolipid biosynthesis; lipid IV(A) biosynthesis; lipid IV(A) from (3R)-3-hydroxytetradecanoyl-[acyl-carrier-protein] and UDP-N-acetyl-alpha-D-glucosamine: step 2/6. Functionally, catalyzes the hydrolysis of UDP-3-O-myristoyl-N-acetylglucosamine to form UDP-3-O-myristoylglucosamine and acetate, the committed step in lipid A biosynthesis. This Chromobacterium violaceum (strain ATCC 12472 / DSM 30191 / JCM 1249 / CCUG 213 / NBRC 12614 / NCIMB 9131 / NCTC 9757 / MK) protein is UDP-3-O-acyl-N-acetylglucosamine deacetylase.